A 185-amino-acid polypeptide reads, in one-letter code: Elongation factor P (185 aa).

Belongs to the elongation factor P family.

The protein localises to the cytoplasm. It functions in the pathway protein biosynthesis; polypeptide chain elongation. Involved in peptide bond synthesis. Stimulates efficient translation and peptide-bond synthesis on native or reconstituted 70S ribosomes in vitro. Probably functions indirectly by altering the affinity of the ribosome for aminoacyl-tRNA, thus increasing their reactivity as acceptors for peptidyl transferase. This Salinispora tropica (strain ATCC BAA-916 / DSM 44818 / JCM 13857 / NBRC 105044 / CNB-440) protein is Elongation factor P.